A 1414-amino-acid polypeptide reads, in one-letter code: Phenyloxazoline synthase MbtB (1414 aa).

The region spanning 5–78 (TACSEIIRAE…AWSQLVSAGT (74 aa)) is the Carrier 1 domain. The residue at position 39 (Ser39) is an O-(pantetheine 4'-phosphoryl)serine. The interval 96 to 394 (EGEPFPLAPM…SSLLLDVDLT (299 aa)) is condensation/cyclization. Residues 579 to 975 (SYAQLRDQAS…RLPGVHAAAA (397 aa)) form an adenylation region. One can recognise a Carrier 2 domain in the interval 1057 to 1135 (APRTVLQRAL…ALAQLLTGRE (79 aa)). Ser1094 is subject to O-(pantetheine 4'-phosphoryl)serine. The segment at 1188-1413 (GAVLVFPHAG…AVARMVSADV (226 aa)) is thioesterase.

Belongs to the ATP-dependent AMP-binding enzyme family. MbtB subfamily. Requires pantetheine 4'-phosphate as cofactor. Post-translationally, 4'-phosphopantetheine is transferred from CoA to a specific serine in each of the two carrier protein domains, leading to their activation from apo to holo forms.

Its pathway is siderophore biosynthesis; mycobactin biosynthesis. Involved in the initial steps of the mycobactin biosynthetic pathway. Putatively couples activated salicylic acid with serine or threonine and cyclizes this precursor to the hydroxyphenyloxazoline ring system present in this class of siderophores. The sequence is that of Phenyloxazoline synthase MbtB (mbtB) from Mycobacterium bovis (strain ATCC BAA-935 / AF2122/97).